The primary structure comprises 464 residues: Septin homolog spn5 (464 aa).

Residues Gln-28–Pro-91 are disordered. Basic and acidic residues-rich tracts occupy residues Glu-41–Ile-54 and Thr-69–Glu-81. Residues Asn-115–Ala-370 form the Septin-type G domain. A G1 motif region spans residues Gly-125–Thr-132. GTP is bound by residues Gly-125–Thr-132, Thr-151, Gly-177, Lys-257–Glu-265, Gly-304, and Arg-319. The tract at residues Asp-174–Gly-177 is G3 motif. Residues Gly-256 to Asp-259 are G4 motif. Residues Leu-396–Gly-453 adopt a coiled-coil conformation.

The protein belongs to the TRAFAC class TrmE-Era-EngA-EngB-Septin-like GTPase superfamily. Septin GTPase family. In terms of assembly, component of the sporulation-specific septin complex composed of at least spn2, spn5, spn6 and spn7.

The protein resides in the nucleus. The protein localises to the forespore membrane. In terms of biological role, septin-like protein involved in the correct orientation of forespore membrane extension during sporulation. This is Septin homolog spn5 (spn5) from Schizosaccharomyces pombe (strain 972 / ATCC 24843) (Fission yeast).